The primary structure comprises 58 residues: Large ribosomal subunit protein bL32 (58 aa).

The interval 1 to 24 (MAVPKKKTSKSKRDKRKATWKRKA) is disordered.

The protein belongs to the bacterial ribosomal protein bL32 family.

The chain is Large ribosomal subunit protein bL32 from Synechococcus sp. (strain ATCC 27144 / PCC 6301 / SAUG 1402/1) (Anacystis nidulans).